The following is a 115-amino-acid chain: Immunoglobulin kappa chain variable 12-41 (115 aa).

The signal sequence occupies residues 1 to 20 (MSVLTQVLALLLLWLTGARC). The segment at 21–43 (DIQMTQSPASLSASVGETVTITC) is framework-1. Cys-43 and Cys-108 are joined by a disulfide. Residues 44–54 (RASGNIHNYLA) form a complementarity-determining-1 region. The tract at residues 55-69 (WYQQKQGKSPQLLVY) is framework-2. Residues 70–76 (NAKTLAD) are complementarity-determining-2. A framework-3 region spans residues 77–108 (GVPSRFSGSGSGTQYSLKINSLQPEDFGSYYC). The complementarity-determining-3 stretch occupies residues 109–115 (QHFWSTP).

The protein is Immunoglobulin kappa chain variable 12-41 of Mus musculus (Mouse).